The chain runs to 520 residues: MIRRIRTLTPLLVLACAGSGAWASKKAFNIQDDLLAYPQFQVFFPDEYILDARARELLQNQQESSSASADKTFSEGNDAQVYLGSRKDQSEDVNKETIEGSGFTYEEMLLEGQRYLCSIPQVDNGNRDQTNGAESTSKEDEQREIARATDRGLELLREMEGKCMYYISGWWSYSFCYKKQIKQFHALPSGPGVPNYPPIEDSTTHSFVLGRFPNSGDDEDLEGDAEHKKTTTDVAELQTKGGSRYLVQRLGGGTKCDLTGKDRKIEVQFHCHPQSTDRIGWIKELTTCSYLMVIYTPRLCNDVAFLPPQQDEAHAIECREILSEEEVSDWEANREYHLAQQLVESAITPEFPVVGDIEVGAHKWVGSEGKQIEKGRVASIGEEKIEVVAKRQNGEITRLSKEELKKYGLDPEKIETLKSRLEELAKGKDWTLEIVESNGERGLVGTVDSNDDEKEDHAAQGSISQPAQGTTADKGESNAETGEEKKKADEKIDHYEPEKSGPTTDDADDGSEEIFFKDEL.

Residues M1–A23 form the signal peptide. Residues Q121–S135 show a composition bias toward polar residues. The interval Q121 to E144 is disordered. One can recognise an MRH domain in the interval G161 to D302. A disulfide bridge links C163 with C176. 7 residues coordinate a mannooligosaccharide derivative: W170, W171, Q183, D257, R263, E284, and Y290. 2 disulfides stabilise this stretch: C256–C288 and C271–C300. The segment at G442–L520 is disordered. Positions G461 to T471 are enriched in polar residues. Positions D473 to K499 are enriched in basic and acidic residues. Positions K517 to L520 match the Prevents secretion from ER motif.

It belongs to the OS-9 family. As to quaternary structure, interacts with missfolded ER lumenal proteins.

It localises to the endoplasmic reticulum membrane. Its function is as follows. Lectin involved in the quality control of the secretory pathway. As a member of the endoplasmic reticulum-associated degradation lumenal (ERAD-L) surveillance system, targets misfolded endoplasmic reticulum lumenal glycoproteins for degradation. The chain is Protein OS-9 homolog (yos9) from Aspergillus fumigatus (strain ATCC MYA-4609 / CBS 101355 / FGSC A1100 / Af293) (Neosartorya fumigata).